The sequence spans 192 residues: uncharacterized protein (192 aa).

The region spanning 29 to 160 is the Nudix hydrolase domain; the sequence is RRQAAVLIPL…PLDIQRRGHD (132 aa). The Nudix box motif lies at 67-89; sequence GAVDSTDASLIAAALREAHEEVA. Residues Glu-83 and Glu-87 each coordinate Mg(2+).

The protein belongs to the Nudix hydrolase family. PCD1 subfamily. Mn(2+) is required as a cofactor. It depends on Mg(2+) as a cofactor.

Its function is as follows. Probably mediates the hydrolysis of some nucleoside diphosphate derivatives. This is an uncharacterized protein from Enterobacter sp. (strain 638).